The chain runs to 856 residues: DNA mismatch repair protein MutS (856 aa).

Position 607–614 (607–614 (GPNMSGKS)) interacts with ATP.

This sequence belongs to the DNA mismatch repair MutS family.

This protein is involved in the repair of mismatches in DNA. It is possible that it carries out the mismatch recognition step. This protein has a weak ATPase activity. This chain is DNA mismatch repair protein MutS, found in Lactobacillus delbrueckii subsp. bulgaricus (strain ATCC 11842 / DSM 20081 / BCRC 10696 / JCM 1002 / NBRC 13953 / NCIMB 11778 / NCTC 12712 / WDCM 00102 / Lb 14).